Consider the following 1299-residue polypeptide: Sophorolipid transporter (1299 aa).

The Cytoplasmic segment spans residues M1–E64. The helical transmembrane segment at I65–V85 threads the bilayer. Residues I65 to K356 form the ABC transmembrane type-1 1 domain. Topologically, residues G86 to L114 are extracellular. A helical membrane pass occupies residues Y115–V135. The Cytoplasmic segment spans residues D136 to K187. Residues L188–S208 form a helical membrane-spanning segment. Residues Q209–C214 are Extracellular-facing. Residues I215 to A235 traverse the membrane as a helical segment. Topologically, residues K236 to S293 are cytoplasmic. A helical membrane pass occupies residues L294 to W314. Over Q315–D326 the chain is Extracellular. Residues V327–I347 form a helical membrane-spanning segment. The Cytoplasmic segment spans residues A348–Y725. The 246-residue stretch at I393–A638 folds into the ABC transporter 1 domain. G428 to S435 provides a ligand contact to ATP. A compositionally biased stretch (polar residues) spans S681–P690. A disordered region spans residues S681–P703. Residues I726–I746 form a helical membrane-spanning segment. Positions L727 to S1016 constitute an ABC transmembrane type-1 2 domain. Over T747 to N769 the chain is Extracellular. A helical membrane pass occupies residues I770–I790. At A791–T848 the chain is on the cytoplasmic side. The helical transmembrane segment at L849 to F869 threads the bilayer. The Extracellular segment spans residues N870–G874. Residues L875–L895 traverse the membrane as a helical segment. Topologically, residues T896–S954 are cytoplasmic. A helical transmembrane segment spans residues A955 to W975. Over G976–V987 the chain is Extracellular. Residues A988–F1008 form a helical membrane-spanning segment. The Cytoplasmic segment spans residues S1009 to I1299. An ABC transporter 2 domain is found at I1053 to L1293. G1088 to S1095 serves as a coordination point for ATP.

Belongs to the ABC transporter superfamily. ABCB family. Multidrug resistance exporter (TC 3.A.1.201) subfamily.

The protein localises to the cell membrane. Functionally, transports acidic acylated and non-acylated sophorolipids (SLs) into the extracellular space, where they can be lactonized by lactone esterase. This chain is Sophorolipid transporter (mdr), found in Starmerella bombicola (Yeast).